A 348-amino-acid polypeptide reads, in one-letter code: Dihydroorotase (348 aa).

2 residues coordinate Zn(2+): His14 and His16. Residues 16-18 (HLR) and Asn42 contribute to the substrate site. Residues Lys100, His137, and His175 each contribute to the Zn(2+) site. Lys100 bears the N6-carboxylysine mark. His137 lines the substrate pocket. Leu220 is a substrate binding site. Asp248 is a binding site for Zn(2+). The active site involves Asp248. Residues His252 and Ala264 each coordinate substrate.

The protein belongs to the metallo-dependent hydrolases superfamily. DHOase family. Class II DHOase subfamily. In terms of assembly, homodimer. It depends on Zn(2+) as a cofactor.

It carries out the reaction (S)-dihydroorotate + H2O = N-carbamoyl-L-aspartate + H(+). The protein operates within pyrimidine metabolism; UMP biosynthesis via de novo pathway; (S)-dihydroorotate from bicarbonate: step 3/3. In terms of biological role, catalyzes the reversible cyclization of carbamoyl aspartate to dihydroorotate. In Pseudomonas putida (strain W619), this protein is Dihydroorotase.